We begin with the raw amino-acid sequence, 379 residues long: Leukocyte elastase inhibitor A (379 aa).

Ser300 bears the Phosphoserine mark.

This sequence belongs to the serpin family. Ov-serpin subfamily. As to quaternary structure, monomer.

The protein localises to the secreted. The protein resides in the cytoplasm. It localises to the cytolytic granule. It is found in the early endosome. Regulates the activity of the neutrophil proteases. This chain is Leukocyte elastase inhibitor A (Serpinb1a), found in Rattus norvegicus (Rat).